Consider the following 154-residue polypeptide: Large ribosomal subunit protein uL13 (154 aa).

Belongs to the universal ribosomal protein uL13 family. Part of the 50S ribosomal subunit.

This protein is one of the early assembly proteins of the 50S ribosomal subunit, although it is not seen to bind rRNA by itself. It is important during the early stages of 50S assembly. This chain is Large ribosomal subunit protein uL13, found in Bartonella tribocorum (strain CIP 105476 / IBS 506).